The sequence spans 359 residues: Peptide chain release factor 1 (359 aa).

Gln-235 carries the post-translational modification N5-methylglutamine.

The protein belongs to the prokaryotic/mitochondrial release factor family. Post-translationally, methylated by PrmC. Methylation increases the termination efficiency of RF1.

The protein localises to the cytoplasm. Peptide chain release factor 1 directs the termination of translation in response to the peptide chain termination codons UAG and UAA. This chain is Peptide chain release factor 1, found in Verminephrobacter eiseniae (strain EF01-2).